Reading from the N-terminus, the 326-residue chain is F-box/LRR-repeat protein 12 (326 aa).

Positions Met1–Val47 constitute an F-box domain. LRR repeat units lie at residues Leu51–Gly78, Ala86–Val111, Asp113–Ser133, Val161–Gly185, Thr186–Gly211, Cys212–Thr236, Val237–Gly261, and Pro266–Gly291.

In terms of assembly, interacts with SKP1 and CUL1.

It participates in protein modification; protein ubiquitination. In terms of biological role, substrate-recognition component of the SCF (SKP1-CUL1-F-box protein)-type E3 ubiquitin ligase complex. Mediates the polyubiquitination and proteasomal degradation of CAMK1 leading to disruption of cyclin D1/CDK4 complex assembly which results in G1 cell cycle arrest in lung epithelia. The sequence is that of F-box/LRR-repeat protein 12 (FBXL12) from Homo sapiens (Human).